Here is a 535-residue protein sequence, read N- to C-terminus: RAN GTPase-activating protein 1 (535 aa).

A WPP region spans residues 1 to 115; that stretch reads MDHSAKTTQN…EESEVEVSKD (115 aa). 9 LRR repeats span residues 208 to 231, 236 to 259, 264 to 287, 320 to 343, 353 to 376, 377 to 400, 405 to 428, 433 to 456, and 461 to 488; these read GSKLRYLNLSDNALGEKGIRAFAS, QHDLEELYLMNDGISEDAARAVRE, TDKIRVLQFHNNMTGDEGATAIAE, CSHLKKLDLRDNMFGVEGGIALAK, EIYMSYLNLEDEGTEALSEALLKS, APSLEVLELAGNDITVKSTGNLAA, KQSLAKLNLSENELKDEGTILIAK, HDQLVEVDLSTNMIRRAGARALAQ, and KNTFKLLNINGNFISEEGIDEVNDMFKD. A disordered region spans residues 493 to 535; that stretch reads LVPLDDNDPEGEDFEDEDEEEEGEDGNELESKLGSLKIKQGEE. The segment covering 497 to 520 has biased composition (acidic residues); that stretch reads DDNDPEGEDFEDEDEEEEGEDGNE.

The protein belongs to the RNA1 family. As to quaternary structure, homodimer. Interacts with WIP1 through its WPP domain. Component of Ran complexes at least composed of WIT1 or WIT2, RANGAP1 or RANGAP2, and WIP1 or WIP2 or WIP3. Interacts directly with WIT1, WIP2 and WIP3. Interacts with POK1.

The protein resides in the cytoplasm. It localises to the nucleus envelope. Its subcellular location is the nucleus membrane. It is found in the cytoskeleton. The protein localises to the spindle. The protein resides in the phragmoplast. GTPase activator for the nuclear Ras-related regulatory protein Ran, converting it to the putatively inactive GDP-bound state. Plays a role in spatial signaling during cell division. This Arabidopsis thaliana (Mouse-ear cress) protein is RAN GTPase-activating protein 1 (RANGAP1).